A 402-amino-acid chain; its full sequence is Bone morphogenetic protein 8A (402 aa).

An N-terminal signal peptide occupies residues 1–19 (MAARPGPLWLLGLTLCALG). A propeptide spanning residues 20 to 263 (GGGPGLRPPP…ASPSPIRTPR (244 aa)) is cleaved from the precursor. N-linked (GlcNAc...) asparagine glycans are attached at residues N158 and N343. 3 cysteine pairs are disulfide-bonded: C301-C367, C330-C399, and C334-C401.

This sequence belongs to the TGF-beta family. Homodimer; disulfide-linked.

Its subcellular location is the secreted. Induces cartilage and bone formation. May be the osteoinductive factor responsible for the phenomenon of epithelial osteogenesis. Plays a role in calcium regulation and bone homeostasis. Signaling protein involved in regulation of thermogenesis and energy balance. Proposed to increase the peripheral response of brown adipose tissue (BAT) to adrenergic stimulation while acting centrally in the hypothalamus to increase sympathetic output to BAT. Its function is as follows. Growth factor of the TGF-beta superfamily that plays important role in various biological processes, including spermatogenesis, osteogenesis, steroidogenesis as well as regulation of energy balance. Initiates the canonical BMP signaling cascade by associating with type I receptor BMPR1A and type II receptor BMPR2. Once all three components are bound together in a complex at the cell surface, BMPR2 phosphorylates and activates BMPR1A. In turn, BMPR1A propagates signal by phosphorylating SMAD1/5/8 that travel to the nucleus and act as activators and repressors of transcription of target genes. In addition, activates the SMAD2/3 pathway. This is Bone morphogenetic protein 8A (BMP8A) from Homo sapiens (Human).